We begin with the raw amino-acid sequence, 386 residues long: Adiponectin receptor protein 2 (386 aa).

The disordered stretch occupies residues 1–71; the sequence is MNEPTENRLG…HEYSDEAPQE (71 aa). Residues 1 to 147 are Cytoplasmic-facing; it reads MNEPTENRLG…SIFRIHTETG (147 aa). Basic and acidic residues predominate over residues 15–41; it reads PEPDIRLRKGHQLDGTRRGDNDSHQGD. A helical membrane pass occupies residues 148 to 168; that stretch reads NIWTHLLGCVFFLCLGIFYMF. The Extracellular segment spans residues 169-181; the sequence is RPNISFVAPLQEK. The helical transmembrane segment at 182–202 threads the bilayer; the sequence is VVFGLFFLGAILCLSFSWLFH. His-202 contacts Zn(2+). Topologically, residues 203–213 are cytoplasmic; the sequence is TVYCHSEGVSR. Residues 214 to 234 form a helical membrane-spanning segment; sequence LFSKLDYSGIALLIMGSFVPW. The Extracellular segment spans residues 235 to 245; sequence LYYSFYCNPQP. The chain crosses the membrane as a helical span at residues 246 to 266; sequence CFIYLIVICVLGIAAIIVSQW. At 267–273 the chain is on the cytoplasmic side; the sequence is DMFATPQ. Residues 274 to 294 traverse the membrane as a helical segment; that stretch reads YRGVRAGVFLGLGLSGIIPTL. Residues 295–309 are Extracellular-facing; it reads HYVISEGFLKAATIG. Residues 310 to 330 traverse the membrane as a helical segment; the sequence is QIGWLMLMASLYITGAALYAA. At 331 to 348 the chain is on the cytoplasmic side; the sequence is RIPERFFPGKCDIWFHSH. Zn(2+)-binding residues include His-348 and His-352. A helical membrane pass occupies residues 349–369; it reads QLFHIFVVAGAFVHFHGVSNL. Residues 370-386 are Extracellular-facing; sequence QEFRFMIGGGCSEEDAL.

This sequence belongs to the ADIPOR family. In terms of assembly, may form homooligomers and heterooligomers with ADIPOR1. Interacts with APPL2 (via BAR domain); ADIPOQ dissociates this interaction. In terms of tissue distribution, ubiquitous. Highly expressed in skeletal muscle, liver and placenta. Weakly expressed in brain, heart, colon, spleen, kidney, thymus, small intestine, peripheral blood leukocytes and lung.

The protein localises to the cell membrane. Receptor for ADIPOQ, an essential hormone secreted by adipocytes that regulates glucose and lipid metabolism. Required for normal body fat and glucose homeostasis. ADIPOQ-binding activates a signaling cascade that leads to increased PPARA activity, and ultimately to increased fatty acid oxidation and glucose uptake. Has intermediate affinity for globular and full-length adiponectin. Required for normal revascularization after chronic ischemia caused by severing of blood vessels. The protein is Adiponectin receptor protein 2 of Homo sapiens (Human).